The chain runs to 123 residues: Large ribosomal subunit protein uL18 (123 aa).

This sequence belongs to the universal ribosomal protein uL18 family. In terms of assembly, part of the 50S ribosomal subunit; part of the 5S rRNA/L5/L18/L25 subcomplex. Contacts the 5S and 23S rRNAs.

In terms of biological role, this is one of the proteins that bind and probably mediate the attachment of the 5S RNA into the large ribosomal subunit, where it forms part of the central protuberance. This chain is Large ribosomal subunit protein uL18, found in Chlamydia felis (strain Fe/C-56) (Chlamydophila felis).